The primary structure comprises 417 residues: MSENLIIFNAKVVTPLGFSARKGKEMAELRILEKATVEVVDGIITYVGPNRGEVRDGYYHHFWHYNARGKCLLPGFVDSHTHFVFGGERAEEFSWRLKGESYMSIMQRGGGIASTVQATRELSFIHLRSKAEGLLKKMTAMGITTVEGKSGYGLNRETELLQLKVMRSLNKDEGVRVDIVPTFLGAHALPDEYKERPDDYIDFLIRELLPVIQRDSLAEFCDVFCEEGVFSIEQSRRLLTAAGDYGLLPKLHADEIVPLGGAELAAELGAVSADHLLHASDAGIEAMARKGVVATLLPLTAFALKEPYARGRDMIDAGCAVALATDLNPGSCFSGSIPLTFALACIHMQLTVEEAITALTLNGAAALNRADSIGSIEVGKKGDFVVLDSDNYHILPYYVGMNCVNTTIKGGMLYPSV.

Residues His80 and His82 each coordinate Fe(3+). The Zn(2+) site is built by His80 and His82. Residues Arg89, Tyr152, and His187 each contribute to the 4-imidazolone-5-propanoate site. Tyr152 contacts N-formimidoyl-L-glutamate. His252 serves as a coordination point for Fe(3+). Zn(2+) is bound at residue His252. Glu255 provides a ligand contact to 4-imidazolone-5-propanoate. Asp326 is a Fe(3+) binding site. A Zn(2+)-binding site is contributed by Asp326. Residues Asn328 and Gly330 each contribute to the N-formimidoyl-L-glutamate site. Ser331 contacts 4-imidazolone-5-propanoate.

It belongs to the metallo-dependent hydrolases superfamily. HutI family. It depends on Zn(2+) as a cofactor. The cofactor is Fe(3+).

The protein localises to the cytoplasm. The catalysed reaction is 4-imidazolone-5-propanoate + H2O = N-formimidoyl-L-glutamate. Its pathway is amino-acid degradation; L-histidine degradation into L-glutamate; N-formimidoyl-L-glutamate from L-histidine: step 3/3. Functionally, catalyzes the hydrolytic cleavage of the carbon-nitrogen bond in imidazolone-5-propanoate to yield N-formimidoyl-L-glutamate. It is the third step in the universal histidine degradation pathway. The polypeptide is Imidazolonepropionase (Bacteroides fragilis (strain ATCC 25285 / DSM 2151 / CCUG 4856 / JCM 11019 / LMG 10263 / NCTC 9343 / Onslow / VPI 2553 / EN-2)).